Here is a 652-residue protein sequence, read N- to C-terminus: Carboxypeptidase S1 homolog A (652 aa).

Positions 1–19 (MRLAASIAVALPVIGAASA) are cleaved as a signal peptide. Cysteines 50 and 121 form a disulfide. 6 N-linked (GlcNAc...) asparagine glycosylation sites follow: Asn-77, Asn-132, Asn-161, Asn-168, Asn-184, and Asn-202. The active site involves Ser-238. Asn-260, Asn-299, Asn-347, and Asn-410 each carry an N-linked (GlcNAc...) asparagine glycan. Intrachain disulfides connect Cys-325-Cys-361 and Cys-332-Cys-354. Residue Asp-458 is part of the active site. Cys-461 is a substrate binding site. N-linked (GlcNAc...) asparagine glycosylation is found at Asn-474, Asn-492, and Asn-505. His-516 is a catalytic residue. Residue Glu-517 participates in substrate binding. The N-linked (GlcNAc...) asparagine glycan is linked to Asn-594. Positions 608–628 (AASKGNPPPTTTSSPTASPTA) are disordered. The span at 618–628 (TTSSPTASPTA) shows a compositional bias: low complexity. A lipid anchor (GPI-anchor amidated glycine) is attached at Gly-629. Positions 630 to 652 (SAMLKAPVAMLAISALTVLAFYL) are cleaved as a propeptide — removed in mature form.

This sequence belongs to the peptidase S10 family.

It localises to the cell membrane. The enzyme catalyses Preferential release of a C-terminal arginine or lysine residue.. Extracellular serine carboxypeptidase that contributes to pathogenicity. The polypeptide is Carboxypeptidase S1 homolog A (SCPA) (Arthroderma benhamiae (strain ATCC MYA-4681 / CBS 112371) (Trichophyton mentagrophytes)).